The following is a 212-amino-acid chain: ATP synthase F(0) complex subunit a (212 aa).

6 helical membrane-spanning segments follow: residues 3 to 23 (MMGI…MFTS), 58 to 78 (WAAM…LGLL), 87 to 107 (QLSM…LTGL), 128 to 148 (IPLL…ALGV), 154 to 174 (LTAG…LMPT), and 179 to 199 (ALST…VAMI).

It belongs to the ATPase A chain family. Component of the ATP synthase complex composed at least of ATP5F1A/subunit alpha, ATP5F1B/subunit beta, ATP5MC1/subunit c (homooctomer), MT-ATP6/subunit a, MT-ATP8/subunit 8, ATP5ME/subunit e, ATP5MF/subunit f, ATP5MG/subunit g, ATP5MK/subunit k, ATP5MJ/subunit j, ATP5F1C/subunit gamma, ATP5F1D/subunit delta, ATP5F1E/subunit epsilon, ATP5PF/subunit F6, ATP5PB/subunit b, ATP5PD/subunit d, ATP5PO/subunit OSCP. ATP synthase complex consists of a soluble F(1) head domain (subunits alpha(3) and beta(3)) - the catalytic core - and a membrane F(0) domain - the membrane proton channel (subunits c, a, 8, e, f, g, k and j). These two domains are linked by a central stalk (subunits gamma, delta, and epsilon) rotating inside the F1 region and a stationary peripheral stalk (subunits F6, b, d, and OSCP). Interacts with DNAJC30; interaction is direct.

The protein resides in the mitochondrion inner membrane. The enzyme catalyses H(+)(in) = H(+)(out). In terms of biological role, subunit a, of the mitochondrial membrane ATP synthase complex (F(1)F(0) ATP synthase or Complex V) that produces ATP from ADP in the presence of a proton gradient across the membrane which is generated by electron transport complexes of the respiratory chain. ATP synthase complex consist of a soluble F(1) head domain - the catalytic core - and a membrane F(1) domain - the membrane proton channel. These two domains are linked by a central stalk rotating inside the F(1) region and a stationary peripheral stalk. During catalysis, ATP synthesis in the catalytic domain of F(1) is coupled via a rotary mechanism of the central stalk subunits to proton translocation. With the subunit c (ATP5MC1), forms the proton-conducting channel in the F(0) domain, that contains two crucial half-channels (inlet and outlet) that facilitate proton movement from the mitochondrial intermembrane space (IMS) into the matrix. Protons are taken up via the inlet half-channel and released through the outlet half-channel, following a Grotthuss mechanism. The polypeptide is ATP synthase F(0) complex subunit a (Tropidurus montanus (Lizard)).